A 170-amino-acid polypeptide reads, in one-letter code: MHQVVCATTNPAKIQAILQAFHEIFGEGSCHIASVAVESGVPEQPFGSEETRAGARNRVANARRLLPEADFWVAIEAGIDGDSTFSWVVIENASQRGEARSATLPLPAVILEKVREGEALGPVMSRYTGIDEIGRKEGAIGVFTAGKLTRASVYHQAVILALSPFHNAVY.

8–13 (TTNPAK) is a binding site for substrate. Glutamate 38 and glutamate 68 together coordinate Mg(2+). 68–69 (EA) is a substrate binding site.

Belongs to the YjjX NTPase family. Homodimer. It depends on Mg(2+) as a cofactor. Mn(2+) serves as cofactor.

The enzyme catalyses XTP + H2O = XDP + phosphate + H(+). The catalysed reaction is ITP + H2O = IDP + phosphate + H(+). Functionally, phosphatase that hydrolyzes non-canonical purine nucleotides such as XTP and ITP to their respective diphosphate derivatives. Probably excludes non-canonical purines from DNA/RNA precursor pool, thus preventing their incorporation into DNA/RNA and avoiding chromosomal lesions. The protein is Inosine/xanthosine triphosphatase (yjjX) of Escherichia coli (strain 55989 / EAEC).